We begin with the raw amino-acid sequence, 119 residues long: NADH-quinone oxidoreductase subunit A (119 aa).

3 consecutive transmembrane segments (helical) span residues 7–27, 63–83, and 88–108; these read FPVLLFLIVGTGLGVALVSIG, LVAILFIIFDLETAFLFPWGV, and IGWPGFMAMMIFLLEFLLGFA.

It belongs to the complex I subunit 3 family. As to quaternary structure, NDH-1 is composed of 14 different subunits. Subunits NuoA, H, J, K, L, M, N constitute the membrane sector of the complex.

The protein resides in the cell inner membrane. The enzyme catalyses a quinone + NADH + 5 H(+)(in) = a quinol + NAD(+) + 4 H(+)(out). NDH-1 shuttles electrons from NADH, via FMN and iron-sulfur (Fe-S) centers, to quinones in the respiratory chain. The immediate electron acceptor for the enzyme in this species is believed to be ubiquinone. Couples the redox reaction to proton translocation (for every two electrons transferred, four hydrogen ions are translocated across the cytoplasmic membrane), and thus conserves the redox energy in a proton gradient. The chain is NADH-quinone oxidoreductase subunit A from Paraburkholderia xenovorans (strain LB400).